Reading from the N-terminus, the 538-residue chain is Putative cysteine ligase BshC (538 aa).

Positions Leu-454–Tyr-482 form a coiled coil.

This sequence belongs to the BshC family.

Its function is as follows. Involved in bacillithiol (BSH) biosynthesis. May catalyze the last step of the pathway, the addition of cysteine to glucosamine malate (GlcN-Mal) to generate BSH. The polypeptide is Putative cysteine ligase BshC (Bacillus licheniformis (strain ATCC 14580 / DSM 13 / JCM 2505 / CCUG 7422 / NBRC 12200 / NCIMB 9375 / NCTC 10341 / NRRL NRS-1264 / Gibson 46)).